A 585-amino-acid polypeptide reads, in one-letter code: Arginine--tRNA ligase (585 aa).

A 'HIGH' region motif is present at residues 126-136 (PNIAKEMHVGH).

It belongs to the class-I aminoacyl-tRNA synthetase family. In terms of assembly, monomer.

The protein resides in the cytoplasm. It carries out the reaction tRNA(Arg) + L-arginine + ATP = L-arginyl-tRNA(Arg) + AMP + diphosphate. This Rippkaea orientalis (strain PCC 8801 / RF-1) (Cyanothece sp. (strain PCC 8801)) protein is Arginine--tRNA ligase.